We begin with the raw amino-acid sequence, 262 residues long: 5'-nucleotidase SurE (262 aa).

Residues Asp13, Asp14, Ser44, and Asn97 each contribute to the a divalent metal cation site.

It belongs to the SurE nucleotidase family. A divalent metal cation is required as a cofactor.

It is found in the cytoplasm. The enzyme catalyses a ribonucleoside 5'-phosphate + H2O = a ribonucleoside + phosphate. In terms of biological role, nucleotidase that shows phosphatase activity on nucleoside 5'-monophosphates. This is 5'-nucleotidase SurE from Myxococcus xanthus (strain DK1622).